We begin with the raw amino-acid sequence, 155 residues long: Chromosomal passenger complex protein bir-1 (155 aa).

Residues 20–87 (RLMTFKNFEY…KRDEPCEFVR (68 aa)) form a BIR repeat. Zn(2+) is bound by residues Cys-57, Cys-60, His-76, and Cys-83.

This sequence belongs to the IAP family. In terms of assembly, component of the CPC complex which consists of icp-1; csc-1; bir-1 and air-2. Within the complex, interacts with csc-1, icp-1 and air-2. Interacts with csc-1 in a zinc-dependent-manner; the interaction is direct. As to expression, expressed in oocytes and sperm.

It is found in the chromosome. Its subcellular location is the cytoplasm. The protein localises to the cytoskeleton. It localises to the spindle. The protein resides in the midbody. Component of the chromosomal passenger complex (CPC), a complex that acts as a key regulator of chromosome segregation and cytokinesis. The CPC complex has essential functions at the centromere in ensuring correct chromosome condensation, alignment and segregation. In the complex, required to direct the Aurora B/air-2 kinase to chromosomes. Also functions in spindle midzone formation and in the formation of polar bodies during oogenesis. Required for the localization of the kinetochore component hcp-1 to chromosomes. Involved in the positive regulation of transcription. Involved in the transcriptional regulation of collagen genes. The sequence is that of Chromosomal passenger complex protein bir-1 from Caenorhabditis elegans.